A 361-amino-acid polypeptide reads, in one-letter code: Single-stranded DNA-binding protein 2 (361 aa).

Lysine 6 is subject to N6-acetyllysine. The 33-residue stretch at 18-50 folds into the LisH domain; it reads AREKLALYVYEYLLHVGAQKSAQTFLSEIRWEK. Disordered stretches follow at residues 147 to 171 and 194 to 361; these read GGVP…HPNM and GAMR…TMSV. Positions 204–219 are enriched in gly residues; that stretch reads GGPGMPGMNMGPGGGR. Residues 225-236 are compositionally biased toward polar residues; that stretch reads TNANSIPYSSAS. The span at 246–256 shows a compositional bias: pro residues; that stretch reads GGGPPGTPIMP. A compositionally biased stretch (gly residues) spans 289 to 299; it reads GSDGPMGGLGG. The segment covering 317–332 has biased composition (polar residues); the sequence is ISKNSPNNMSLSNQPG. Serine 321 carries the post-translational modification Phosphoserine. Position 333 is a phosphothreonine (threonine 333). A compositionally biased stretch (polar residues) spans 346–361; that stretch reads NPFQSESYSPSMTMSV.

As to expression, ubiquitous.

Its subcellular location is the nucleus. This Homo sapiens (Human) protein is Single-stranded DNA-binding protein 2 (SSBP2).